The following is a 253-amino-acid chain: MVSSFTSAPRSGFYYFAQGWKLVSQPRIRRFVILPLLVNILLMGGAFWWLFTQLDVWIPTLMSYVPDWLQWLSYLLWPLAVISVLLVFGYFFSTIANWIAAPFNGLLAEQLEARLTGATPPDTGIFGIMKDVPRIMKREWQKFAWYLPRAIVLLILYFIPGIGQTVAPVLWFLFSAWMLAIQYCDYPFDNHKVPFKEMRTALRTRKITNMQFGALTSLFTMIPLLNLFIMPVAVCGATAMWVDCYRDKHAMWR.

The next 4 membrane-spanning stretches (helical) occupy residues 31–51 (FVILPLLVNILLMGGAFWWLF), 75–95 (LLWPLAVISVLLVFGYFFSTI), 151–171 (IVLLILYFIPGIGQTVAPVLW), and 222–242 (IPLLNLFIMPVAVCGATAMWV).

The protein belongs to the CysZ family.

The protein resides in the cell inner membrane. Its function is as follows. High affinity, high specificity proton-dependent sulfate transporter, which mediates sulfate uptake. Provides the sulfur source for the cysteine synthesis pathway. This chain is Sulfate transporter CysZ, found in Shigella dysenteriae serotype 1 (strain Sd197).